The following is a 176-amino-acid chain: ATP-dependent protease subunit HslV (176 aa).

Residue Thr2 is part of the active site. Na(+) is bound by residues Gly157, Cys160, and Thr163.

This sequence belongs to the peptidase T1B family. HslV subfamily. As to quaternary structure, a double ring-shaped homohexamer of HslV is capped on each side by a ring-shaped HslU homohexamer. The assembly of the HslU/HslV complex is dependent on binding of ATP.

Its subcellular location is the cytoplasm. It carries out the reaction ATP-dependent cleavage of peptide bonds with broad specificity.. Allosterically activated by HslU binding. Protease subunit of a proteasome-like degradation complex believed to be a general protein degrading machinery. The chain is ATP-dependent protease subunit HslV from Pseudomonas entomophila (strain L48).